We begin with the raw amino-acid sequence, 122 residues long: UPF0102 protein TTE1452 (122 aa).

This sequence belongs to the UPF0102 family.

The chain is UPF0102 protein TTE1452 from Caldanaerobacter subterraneus subsp. tengcongensis (strain DSM 15242 / JCM 11007 / NBRC 100824 / MB4) (Thermoanaerobacter tengcongensis).